We begin with the raw amino-acid sequence, 319 residues long: MNAALDDKAAKKAAFEGNKLAKRLRHHVGDAINDFNMIEEGDRVMVCLSGGKDSYTLLDILRGLQKSAPINFSIVAVNLDQKQPGFPEHVLPEYLKSIGVEYRIVEEDTYSIVKRLVPEGKTTCSLCSRLRRGILYRVADELGATKIALGHHRDDILHTLFLNMFYGGKMKAMPPKLVSDDGRHMVIRPLAYCREKDIIRYADWKAFPIIPCNLCGSQPNLQRQVVKEMVNDWDKRFPGRVESMFRALQNVVPSHLADPKLFDFVGLQTGDAPFADGDTAFDKEEFRDPAPDADDVEDAPKKRTISILDSRGKESGCGA.

The PP-loop motif signature appears at 49–54 (SGGKDS). 3 residues coordinate [4Fe-4S] cluster: cysteine 124, cysteine 127, and cysteine 215. Positions 276-319 (DGDTAFDKEEFRDPAPDADDVEDAPKKRTISILDSRGKESGCGA) are disordered. 2 stretches are compositionally biased toward basic and acidic residues: residues 280-290 (AFDKEEFRDPA) and 310-319 (SRGKESGCGA).

Belongs to the TtcA family. In terms of assembly, homodimer. It depends on Mg(2+) as a cofactor. Requires [4Fe-4S] cluster as cofactor.

Its subcellular location is the cytoplasm. It carries out the reaction cytidine(32) in tRNA + S-sulfanyl-L-cysteinyl-[cysteine desulfurase] + AH2 + ATP = 2-thiocytidine(32) in tRNA + L-cysteinyl-[cysteine desulfurase] + A + AMP + diphosphate + H(+). It functions in the pathway tRNA modification. Catalyzes the ATP-dependent 2-thiolation of cytidine in position 32 of tRNA, to form 2-thiocytidine (s(2)C32). The sulfur atoms are provided by the cysteine/cysteine desulfurase (IscS) system. The sequence is that of tRNA-cytidine(32) 2-sulfurtransferase from Chromobacterium violaceum (strain ATCC 12472 / DSM 30191 / JCM 1249 / CCUG 213 / NBRC 12614 / NCIMB 9131 / NCTC 9757 / MK).